The following is a 64-amino-acid chain: Conotoxin VnMLCL-042 (64 aa).

Positions 1–19 (MLCLPVFIILLLLASPAAP) are cleaved as a signal peptide. Residues 20–43 (NPLQTRIQSNLIRAGPEDANMKTD) constitute a propeptide that is removed on maturation. Met63 bears the Methionine amide mark.

It belongs to the conotoxin T superfamily. Expressed by the venom duct.

It is found in the secreted. This Conus ventricosus (Mediterranean cone) protein is Conotoxin VnMLCL-042.